The following is a 534-amino-acid chain: Cytochrome P450 monooxygenase AN1598 (534 aa).

N-linked (GlcNAc...) asparagine glycosylation is present at asparagine 3. A helical transmembrane segment spans residues 25-45; the sequence is LYLEILGVLSVVYLLQTLVAY. Asparagine 95 carries N-linked (GlcNAc...) asparagine glycosylation. Position 464 (cysteine 464) interacts with heme. Residue asparagine 498 is glycosylated (N-linked (GlcNAc...) asparagine).

It belongs to the cytochrome P450 family. Heme is required as a cofactor.

Its subcellular location is the membrane. Its pathway is secondary metabolite biosynthesis; terpenoid biosynthesis. Its function is as follows. Bifunctional terpene synthase; part of the gene cluster that mediates the biosynthesis of the diterpene ent-pimara-8(14),15-diene (PD). Within the cluster, the HMG-CoA reductase AN1593 functions in the mevalonate pathway, which produces isoprenoid precursors. The geranylgeranyl pyrophosphate (GGPP) synthase AN1592 is needed in the formation of GGPP, the precursor for diterpenes. Lastly, the pimaradiene synthase pbcA performs the 2 cyclization steps that convert GGPP to ent-pimara-8(14),15-diene. The putative roles of the remaining cluster enzymes in ent-pimara-8(14),15-diene biosynthesis is unclear. The cytochrome P450 monooxygenase AN1598, the glutathione S-transferase AN1595, the oxidoreductases AN1596 and AN1597 probably function as decorative enzymes. It is possible that in biological conditions the compound is oxidized to ent-pimara-8(14),15-dien-19-oic acid, which is a bioactive diterpene compound predominant in many plant extracts. The polypeptide is Cytochrome P450 monooxygenase AN1598 (Emericella nidulans (strain FGSC A4 / ATCC 38163 / CBS 112.46 / NRRL 194 / M139) (Aspergillus nidulans)).